The following is a 787-amino-acid chain: DNA ligase (787 aa).

Residues 32–36, 81–82, and Glu121 contribute to the NAD(+) site; these read DVEYD and SL. The N6-AMP-lysine intermediate role is filled by Lys123. NAD(+) is bound by residues Arg144, Glu181, Lys297, and Lys321. Zn(2+) is bound by residues Cys415, Cys418, Cys445, and Cys451. The BRCT domain maps to 703–787; sequence VEGLPLAGQT…RLTELGVAVD (85 aa).

The protein belongs to the NAD-dependent DNA ligase family. LigA subfamily. Requires Mg(2+) as cofactor. It depends on Mn(2+) as a cofactor.

The catalysed reaction is NAD(+) + (deoxyribonucleotide)n-3'-hydroxyl + 5'-phospho-(deoxyribonucleotide)m = (deoxyribonucleotide)n+m + AMP + beta-nicotinamide D-nucleotide.. DNA ligase that catalyzes the formation of phosphodiester linkages between 5'-phosphoryl and 3'-hydroxyl groups in double-stranded DNA using NAD as a coenzyme and as the energy source for the reaction. It is essential for DNA replication and repair of damaged DNA. The sequence is that of DNA ligase from Pseudomonas savastanoi pv. phaseolicola (strain 1448A / Race 6) (Pseudomonas syringae pv. phaseolicola (strain 1448A / Race 6)).